A 108-amino-acid chain; its full sequence is Hrp pili protein HrpA (108 aa).

The segment covering 41 to 56 (NTGSTDSIDATRSSIS) has biased composition (polar residues). The segment at 41–73 (NTGSTDSIDATRSSISKGDAPSAELDGTANEEN) is disordered.

The protein belongs to the HrpA type 1 family.

The protein resides in the secreted. Its subcellular location is the fimbrium. Major structural protein of the hrp pilus, which is a component of the type III secretion system (T3SS, Hrp secretion system) required for effector protein delivery, parasitism, and pathogenicity. The hrp pilus functions as a conduit for protein delivery into the host cell. Also, affects the expression of T3SS-associated genes. Required for full expression of genes that encode regulatory, secretion, and effector proteins of the T3SS. HrpA-mediated gene regulation apparently is through effect on the mRNA level of hrpR and hrpS. The chain is Hrp pili protein HrpA (hrpA) from Pseudomonas savastanoi pv. glycinea (Pseudomonas syringae pv. glycinea).